We begin with the raw amino-acid sequence, 876 residues long: Alanine--tRNA ligase (876 aa).

Positions 565, 569, 667, and 671 each coordinate Zn(2+).

The protein belongs to the class-II aminoacyl-tRNA synthetase family. Zn(2+) is required as a cofactor.

It is found in the cytoplasm. It carries out the reaction tRNA(Ala) + L-alanine + ATP = L-alanyl-tRNA(Ala) + AMP + diphosphate. In terms of biological role, catalyzes the attachment of alanine to tRNA(Ala) in a two-step reaction: alanine is first activated by ATP to form Ala-AMP and then transferred to the acceptor end of tRNA(Ala). Also edits incorrectly charged Ser-tRNA(Ala) and Gly-tRNA(Ala) via its editing domain. The chain is Alanine--tRNA ligase from Staphylococcus saprophyticus subsp. saprophyticus (strain ATCC 15305 / DSM 20229 / NCIMB 8711 / NCTC 7292 / S-41).